A 355-amino-acid chain; its full sequence is Type II methyltransferase M.MthZI (355 aa).

This sequence belongs to the N(4)/N(6)-methyltransferase family. N(4) subfamily.

It carries out the reaction a 2'-deoxycytidine in DNA + S-adenosyl-L-methionine = an N(4)-methyl-2'-deoxycytidine in DNA + S-adenosyl-L-homocysteine + H(+). Functionally, a beta subtype methylase that recognizes the double-stranded sequence 5'-CTAG-3', methylates C-1 on both strands, and protects the DNA from cleavage by the MthZI endonuclease. This is Type II methyltransferase M.MthZI from Methanothermobacter thermautotrophicus (Methanobacterium thermoformicicum).